A 215-amino-acid polypeptide reads, in one-letter code: Adenylate kinase (215 aa).

ATP is bound at residue 10-15 (GAGKGT). Positions 30 to 59 (STGDMLRAAVKAGTPIGLKAKAVMEAGELV) are NMP. AMP contacts are provided by residues threonine 31, arginine 36, 57-59 (ELV), 85-88 (GYPR), and glutamine 92. Residues 126 to 163 (GRYTCANCGEGYHDRFKQPKVAGVCDVCGSAEFKRRPD) are LID. Arginine 127 serves as a coordination point for ATP. The Zn(2+) site is built by cysteine 130, cysteine 133, cysteine 150, and cysteine 153. Residues arginine 160 and arginine 172 each coordinate AMP. ATP is bound at residue alanine 200.

The protein belongs to the adenylate kinase family. In terms of assembly, monomer.

Its subcellular location is the cytoplasm. It catalyses the reaction AMP + ATP = 2 ADP. The protein operates within purine metabolism; AMP biosynthesis via salvage pathway; AMP from ADP: step 1/1. In terms of biological role, catalyzes the reversible transfer of the terminal phosphate group between ATP and AMP. Plays an important role in cellular energy homeostasis and in adenine nucleotide metabolism. This chain is Adenylate kinase, found in Rhizorhabdus wittichii (strain DSM 6014 / CCUG 31198 / JCM 15750 / NBRC 105917 / EY 4224 / RW1) (Sphingomonas wittichii).